Reading from the N-terminus, the 157-residue chain is Crossover junction endodeoxyribonuclease RuvC (157 aa).

Catalysis depends on residues aspartate 7, glutamate 66, and aspartate 139. Residues aspartate 7, glutamate 66, and aspartate 139 each contribute to the Mg(2+) site.

Belongs to the RuvC family. As to quaternary structure, homodimer which binds Holliday junction (HJ) DNA. The HJ becomes 2-fold symmetrical on binding to RuvC with unstacked arms; it has a different conformation from HJ DNA in complex with RuvA. In the full resolvosome a probable DNA-RuvA(4)-RuvB(12)-RuvC(2) complex forms which resolves the HJ. Mg(2+) is required as a cofactor.

It is found in the cytoplasm. It catalyses the reaction Endonucleolytic cleavage at a junction such as a reciprocal single-stranded crossover between two homologous DNA duplexes (Holliday junction).. In terms of biological role, the RuvA-RuvB-RuvC complex processes Holliday junction (HJ) DNA during genetic recombination and DNA repair. Endonuclease that resolves HJ intermediates. Cleaves cruciform DNA by making single-stranded nicks across the HJ at symmetrical positions within the homologous arms, yielding a 5'-phosphate and a 3'-hydroxyl group; requires a central core of homology in the junction. The consensus cleavage sequence is 5'-(A/T)TT(C/G)-3'. Cleavage occurs on the 3'-side of the TT dinucleotide at the point of strand exchange. HJ branch migration catalyzed by RuvA-RuvB allows RuvC to scan DNA until it finds its consensus sequence, where it cleaves and resolves the cruciform DNA. This chain is Crossover junction endodeoxyribonuclease RuvC, found in Campylobacter curvus (strain 525.92).